We begin with the raw amino-acid sequence, 449 residues long: 3-phosphoshikimate 1-carboxyvinyltransferase (449 aa).

The interval 1-30 (MSHDSSPQPLTAAPGAPLRGRLRPPGDKSI) is disordered. Residues lysine 28, serine 29, and arginine 33 each contribute to the 3-phosphoshikimate site. Lysine 28 serves as a coordination point for phosphoenolpyruvate. 2 residues coordinate phosphoenolpyruvate: glycine 101 and arginine 129. Residues serine 175, glutamine 177, aspartate 330, and lysine 357 each contribute to the 3-phosphoshikimate site. Position 177 (glutamine 177) interacts with phosphoenolpyruvate. Aspartate 330 (proton acceptor) is an active-site residue. Residues arginine 361 and arginine 405 each coordinate phosphoenolpyruvate.

This sequence belongs to the EPSP synthase family. Monomer.

The protein localises to the cytoplasm. The enzyme catalyses 3-phosphoshikimate + phosphoenolpyruvate = 5-O-(1-carboxyvinyl)-3-phosphoshikimate + phosphate. Its pathway is metabolic intermediate biosynthesis; chorismate biosynthesis; chorismate from D-erythrose 4-phosphate and phosphoenolpyruvate: step 6/7. Catalyzes the transfer of the enolpyruvyl moiety of phosphoenolpyruvate (PEP) to the 5-hydroxyl of shikimate-3-phosphate (S3P) to produce enolpyruvyl shikimate-3-phosphate and inorganic phosphate. In Methylobacterium radiotolerans (strain ATCC 27329 / DSM 1819 / JCM 2831 / NBRC 15690 / NCIMB 10815 / 0-1), this protein is 3-phosphoshikimate 1-carboxyvinyltransferase.